A 341-amino-acid polypeptide reads, in one-letter code: S-adenosylmethionine:tRNA ribosyltransferase-isomerase (341 aa).

This sequence belongs to the QueA family. As to quaternary structure, monomer.

The protein localises to the cytoplasm. It catalyses the reaction 7-aminomethyl-7-carbaguanosine(34) in tRNA + S-adenosyl-L-methionine = epoxyqueuosine(34) in tRNA + adenine + L-methionine + 2 H(+). It participates in tRNA modification; tRNA-queuosine biosynthesis. Transfers and isomerizes the ribose moiety from AdoMet to the 7-aminomethyl group of 7-deazaguanine (preQ1-tRNA) to give epoxyqueuosine (oQ-tRNA). The sequence is that of S-adenosylmethionine:tRNA ribosyltransferase-isomerase from Clostridium botulinum (strain Langeland / NCTC 10281 / Type F).